Here is a 505-residue protein sequence, read N- to C-terminus: uncharacterized protein (505 aa).

The N-terminal stretch at 1–19 (MILFTAIILVASVVHVVVS) is a signal peptide. Over 20–483 (SPQQCYYCVE…EQPNSAPRGE (464 aa)) the chain is Extracellular. A helical membrane pass occupies residues 484–504 (IHQLFRCTFVAVFIVFACFIV). Residue Cys-505 is a topological domain, cytoplasmic.

As to expression, component of the acid-insoluble and acid-soluble organic matrix of the aragonitic skeleton (at protein level).

It localises to the membrane. This is an uncharacterized protein from Acropora millepora (Staghorn coral).